A 397-amino-acid polypeptide reads, in one-letter code: Tryptophan synthase beta chain (397 aa).

Residue Lys-88 is modified to N6-(pyridoxal phosphate)lysine.

Belongs to the TrpB family. Tetramer of two alpha and two beta chains. The cofactor is pyridoxal 5'-phosphate.

The catalysed reaction is (1S,2R)-1-C-(indol-3-yl)glycerol 3-phosphate + L-serine = D-glyceraldehyde 3-phosphate + L-tryptophan + H2O. It functions in the pathway amino-acid biosynthesis; L-tryptophan biosynthesis; L-tryptophan from chorismate: step 5/5. The beta subunit is responsible for the synthesis of L-tryptophan from indole and L-serine. In Haemophilus influenzae (strain 86-028NP), this protein is Tryptophan synthase beta chain.